The following is a 327-amino-acid chain: MSATTTEAKQTFLCKERLPRRYHPPSKVLSRLPTSFLPYGELLRLHKPLGYILVCYPFLVAGAFSASIAPEVLEADFWPRITLLCLWSIFLRSGGCIWDDIADQHVDAKVARTRLRPLPRGAVSNSQATIFAAGTFLCGFAFVAELPGVCMVDALIMLFFAVLYPYGKRHSNYPQLILGTIGWAIPMTMHGLNLRPLDHPIPMAAMFAFIALVTIMNDIIYARQDIEEDIKAGVGSMAVRFQHCLDALTFALVFASSAALVIAGKLGNMGAPFFTISVGGHFGFFLFLAMANQRDPKSGVEWAAKRCCTSATFLLIVGMVVDLVWRS.

Helical transmembrane passes span 49 to 69 (LGYILVCYPFLVAGAFSASIA), 81 to 101 (ITLLCLWSIFLRSGGCIWDDI), 140 to 160 (FAFVAELPGVCMVDALIMLFF), 174 to 194 (PQLILGTIGWAIPMTMHGLNL), 201 to 221 (IPMAAMFAFIALVTIMNDIIY), 244 to 264 (CLDALTFALVFASSAALVIAG), 271 to 291 (APFFTISVGGHFGFFLFLAMA), and 307 to 327 (CCTSATFLLIVGMVVDLVWRS).

The protein belongs to the UbiA prenyltransferase family. The cofactor is Mg(2+).

The protein localises to the membrane. It functions in the pathway secondary metabolite biosynthesis; terpenoid biosynthesis. In terms of biological role, polyprenyl transferase; part of the gene cluster that mediates the biosynthesis of anditomin, a fungal meroterpenoid. The first step of the pathway is the synthesis of 3,5-dimethylorsellinic acid (DMOA) by the polyketide synthase andM. DMOA is then converted to the phthalide compound 5,7-dihydroxy-4,6-dimethylphthalide (DHDMP) by the cytochrome P450 monooxygenase andK, which is further prenylated by the prenyltransferase andD to yield farnesyl-DHDMP. Further epoxidation by the FAD-dependent monooxygenase andE leads to epoxyfarnesyl-DHDMP. The next step involves the terpene cyclase andB that converts epoxyfarnesyl-DHDMP into preandiloid A through opening of the epoxide ring followed by the cyclization of the farnesyl moiety. Preandiloid A is in turn oxidized at the C-3 hydroxyl group to yield preandiloid B by the dehydrogenase andC. The dioxygenase andA is solely responsible for the dehydrogenation of preandiloid B leading to the enone preandiloid C, as well as for the intriguing structural rearrangement to generate the bicyclo[2.2.2]octane core, transforming preandiloid C into andiconin. FAD-binding monooxygenase andJ then produces andilesin D which is reduced by dehydrogenase andI to yield andilesin A. Action of acetyltransferase andG followed by a spontaneous acetate elimination leads then to andilesin B, which is in turn substrate of the short chain dehydrogenase andH to yield andilesin C. Finally, the dioxygenase andF catalyzes the transformation of andilesin C to anditomin. The protein is Polyprenyl transferase andD of Emericella variicolor (Aspergillus stellatus).